We begin with the raw amino-acid sequence, 179 residues long: Lebocin-1/2 (179 aa).

Positions 1–16 are cleaved as a signal peptide; it reads MYKFLVFSSVLVLFFA. Positions 17 to 120 are excised as a propeptide; it reads QASCQRFIQP…QPIESHRNTR (104 aa). The segment at 93 to 116 is disordered; it reads NNEASIEHSHHTVDTGLDQPIESH. A glycan (O-linked (GalNAc...) threonine) is linked at Thr135. The propeptide occupies 153–179; the sequence is RRHASDDQEELRQYNEHFLIPRDIFQE.

This sequence belongs to the lebocin family. O-glycosylation is important for the antibacterial activity of lebocin, O-linked glycan structure is a disaccharide (Gal-GalNAc) in case of lebocin 1 and a monosaccharide (GalNAc) in case of lebocin 2. In terms of tissue distribution, hemolymph. Produced in fat body.

It is found in the secreted. Antibacterial peptide. This Bombyx mori (Silk moth) protein is Lebocin-1/2.